The sequence spans 142 residues: Small ribosomal subunit protein uS19 (142 aa).

Ser2 bears the N-acetylserine mark. Residues Lys24, Lys35, and Lys64 each participate in a glycyl lysine isopeptide (Lys-Gly) (interchain with G-Cter in ubiquitin) cross-link.

This sequence belongs to the universal ribosomal protein uS19 family. As to quaternary structure, component of the small ribosomal subunit (SSU). Mature yeast ribosomes consist of a small (40S) and a large (60S) subunit. The 40S small subunit contains 1 molecule of ribosomal RNA (18S rRNA) and 33 different proteins (encoded by 57 genes). The large 60S subunit contains 3 rRNA molecules (25S, 5.8S and 5S rRNA) and 46 different proteins (encoded by 81 genes).

The protein resides in the cytoplasm. Its function is as follows. Component of the ribosome, a large ribonucleoprotein complex responsible for the synthesis of proteins in the cell. The small ribosomal subunit (SSU) binds messenger RNAs (mRNAs) and translates the encoded message by selecting cognate aminoacyl-transfer RNA (tRNA) molecules. The large subunit (LSU) contains the ribosomal catalytic site termed the peptidyl transferase center (PTC), which catalyzes the formation of peptide bonds, thereby polymerizing the amino acids delivered by tRNAs into a polypeptide chain. The nascent polypeptides leave the ribosome through a tunnel in the LSU and interact with protein factors that function in enzymatic processing, targeting, and the membrane insertion of nascent chains at the exit of the ribosomal tunnel. uS19 is involved in the nuclear export of the small ribosomal subunit precursor. Has a role in the late stage of the assembly of pre-40S particles within the nucleus and controls their export to the cytoplasm. This is Small ribosomal subunit protein uS19 from Saccharomyces cerevisiae (strain ATCC 204508 / S288c) (Baker's yeast).